A 352-amino-acid chain; its full sequence is Desmethylxanthohumol 6'-O-methyltransferase (352 aa).

Asp219 provides a ligand contact to S-adenosyl-L-methionine. His257 (proton acceptor) is an active-site residue.

The protein belongs to the class I-like SAM-binding methyltransferase superfamily. Cation-independent O-methyltransferase family. In terms of assembly, homodimer. Highly expressed in lupulin glands. Detected in early-, mid- and late-stage cones.

The protein resides in the cytoplasm. The catalysed reaction is desmethylxanthohumol + S-adenosyl-L-methionine = xanthohumol + S-adenosyl-L-homocysteine + H(+). It carries out the reaction xanthogalenol + S-adenosyl-L-methionine = 4'-O-methylxanthohumol + S-adenosyl-L-homocysteine + H(+). Its pathway is secondary metabolite biosynthesis. With respect to regulation, inhibited by S-adenosyl homocysteine. Involved in the biosynthesis of prenylated phenolics natural products which contribute to the bitter taste of beer and display broad biological activities. Catalyzes the biosynthesis of xanthohumol. Methylates desmethylxanthohumol and xanthogalenol, but not caffeic acid, prenylflavanones, simple phenols or phenylpropanoids. This is Desmethylxanthohumol 6'-O-methyltransferase from Humulus lupulus (European hop).